The chain runs to 468 residues: Phosphatidylinositol-binding clathrin assembly protein LAP (468 aa).

An ENTH domain is found at 16–158; the sequence is RHSLAGQGLA…LSYRAMAFDF (143 aa). Residues 438 to 468 are disordered; it reads NAGDGTAKYDGGAGSSPFDWGATDDDGGAAQ. Positions 459-468 are enriched in acidic residues; sequence ATDDDGGAAQ.

The protein belongs to the PICALM/SNAP91 family. As to quaternary structure, binds clathrin and phosphatidylinositol 4,5-bisphosphate. In terms of tissue distribution, in embryos, expression is seen in central and peripheral nervous systems (brain and ventral nerve cord) and Garland cells. Coexpressed with clathrin at presynaptic boutons of neuromuscular junctions.

The protein localises to the membrane. It is found in the clathrin-coated pit. Its subcellular location is the golgi apparatus. It localises to the cytoplasmic vesicle. The protein resides in the clathrin-coated vesicle. Its function is as follows. Assembly protein recruiting clathrin and adaptor protein complex 2 (AP2) to cell membranes at sites of coated-pit formation and clathrin-vesicle assembly. May be required to determine the amount of membrane to be recycled, possibly by regulating the size of the clathrin cage. Involved in AP2-dependent clathrin-mediated endocytosis at the neuromuscular junction. The polypeptide is Phosphatidylinositol-binding clathrin assembly protein LAP (lap) (Drosophila melanogaster (Fruit fly)).